The chain runs to 229 residues: Large ribosomal subunit protein uL1 (229 aa).

The protein belongs to the universal ribosomal protein uL1 family. Part of the 50S ribosomal subunit.

Its function is as follows. Binds directly to 23S rRNA. The L1 stalk is quite mobile in the ribosome, and is involved in E site tRNA release. Functionally, protein L1 is also a translational repressor protein, it controls the translation of the L11 operon by binding to its mRNA. The chain is Large ribosomal subunit protein uL1 from Histophilus somni (strain 129Pt) (Haemophilus somnus).